A 24-amino-acid chain; its full sequence is Glutathione S-transferase (24 aa).

Belongs to the GST superfamily. In terms of assembly, monomer and homodimer.

It is found in the cytoplasm. The enzyme catalyses RX + glutathione = an S-substituted glutathione + a halide anion + H(+). Its function is as follows. Conjugation of reduced glutathione to a wide number of exogenous and endogenous hydrophobic electrophiles. The chain is Glutathione S-transferase from Pseudomonas sp. (strain CF600).